The sequence spans 178 residues: Endoribonuclease YbeY (178 aa).

Zn(2+) is bound by residues H118, H122, and H128. Positions 158–178 are disordered; that stretch reads ADRQSEKDRRLLDKSRYFDEP.

This sequence belongs to the endoribonuclease YbeY family. It depends on Zn(2+) as a cofactor.

The protein resides in the cytoplasm. Single strand-specific metallo-endoribonuclease involved in late-stage 70S ribosome quality control and in maturation of the 3' terminus of the 16S rRNA. The protein is Endoribonuclease YbeY of Mycolicibacterium smegmatis (strain ATCC 700084 / mc(2)155) (Mycobacterium smegmatis).